Here is a 393-residue protein sequence, read N- to C-terminus: Pinosylvin synthase (393 aa).

57-60 contacts substrate; it reads KFKR. Residue Cys167 is part of the active site. Substrate-binding positions include Leu270 and 308–310; that span reads GGR.

This sequence belongs to the thiolase-like superfamily. Chalcone/stilbene synthases family. In terms of assembly, homodimer.

It is found in the cytoplasm. The enzyme catalyses (E)-cinnamoyl-CoA + 3 malonyl-CoA + 3 H(+) = (E)-pinosylvin + 4 CO2 + 4 CoA. It carries out the reaction 3-phenylpropanoyl-CoA + 3 malonyl-CoA + 3 H(+) = dihydropinosylvin + 4 CO2 + 4 CoA. It participates in phytoalexin biosynthesis; hydropinosylvin biosynthesis. Functionally, catalyzes the production of pinosylvin from cinnamoyl-CoA and malonyl-CoA, and dihydropinosylvin from dihydrocinnamoyl-CoA. In Pinus sylvestris (Scotch pine), this protein is Pinosylvin synthase.